The following is a 214-amino-acid chain: ATP-dependent Clp protease proteolytic subunit 3 (214 aa).

Serine 106 acts as the Nucleophile in catalysis. Histidine 131 is an active-site residue.

It belongs to the peptidase S14 family. In terms of assembly, fourteen ClpP subunits assemble into 2 heptameric rings which stack back to back to give a disk-like structure with a central cavity, resembling the structure of eukaryotic proteasomes.

It localises to the cytoplasm. The catalysed reaction is Hydrolysis of proteins to small peptides in the presence of ATP and magnesium. alpha-casein is the usual test substrate. In the absence of ATP, only oligopeptides shorter than five residues are hydrolyzed (such as succinyl-Leu-Tyr-|-NHMec, and Leu-Tyr-Leu-|-Tyr-Trp, in which cleavage of the -Tyr-|-Leu- and -Tyr-|-Trp bonds also occurs).. In terms of biological role, cleaves peptides in various proteins in a process that requires ATP hydrolysis. Has a chymotrypsin-like activity. Plays a major role in the degradation of misfolded proteins. The sequence is that of ATP-dependent Clp protease proteolytic subunit 3 from Trichormus variabilis (strain ATCC 29413 / PCC 7937) (Anabaena variabilis).